Here is a 170-residue protein sequence, read N- to C-terminus: Probable phospholipid hydroperoxide glutathione peroxidase (170 aa).

Cys-44 is a catalytic residue.

The protein belongs to the glutathione peroxidase family.

The protein localises to the cytoplasm. It catalyses the reaction a hydroperoxy polyunsaturated fatty acid + 2 glutathione = a hydroxy polyunsaturated fatty acid + glutathione disulfide + H2O. Its function is as follows. Protects cells and enzymes from oxidative damage, by catalyzing the reduction of hydrogen peroxide, lipid peroxides and organic hydroperoxide, by glutathione. The protein is Probable phospholipid hydroperoxide glutathione peroxidase (GPXMC1) of Mesembryanthemum crystallinum (Common ice plant).